Here is a 438-residue protein sequence, read N- to C-terminus: Histidine--tRNA ligase (438 aa).

This sequence belongs to the class-II aminoacyl-tRNA synthetase family. As to quaternary structure, homodimer.

The protein resides in the cytoplasm. The enzyme catalyses tRNA(His) + L-histidine + ATP = L-histidyl-tRNA(His) + AMP + diphosphate + H(+). The sequence is that of Histidine--tRNA ligase from Aromatoleum aromaticum (strain DSM 19018 / LMG 30748 / EbN1) (Azoarcus sp. (strain EbN1)).